We begin with the raw amino-acid sequence, 333 residues long: Chemokine XC receptor 1 (333 aa).

At 1 to 31 (MESSGNPESTTFFYYDLQSQPCENQAWVFAT) the chain is on the extracellular side. The chain crosses the membrane as a helical span at residues 32–59 (LATTVLYCLVFLLSLVGNSLVLWVLVKY). At 60–69 (ESLESLTNIF) the chain is on the cytoplasmic side. The chain crosses the membrane as a helical span at residues 70 to 89 (ILNLCLSDLVFACLLPVWIS). The Extracellular segment spans residues 90 to 103 (PYHWGWVLGDFLCK). C102 and C175 are joined by a disulfide. Residues 104–125 (LLNMIFSISLYSSIFFLTIMTI) traverse the membrane as a helical segment. At 126–142 (HRYLSVVSPLSTLRVPT) the chain is on the cytoplasmic side. The chain crosses the membrane as a helical span at residues 143-167 (LRCRVLVTMAVWVASILSSILDTIF). Residues 168-190 (HKVLSSGCDYSELTWYLTSVYQH) are Extracellular-facing. Residues 191 to 209 (NLFFLLSLGIILFCYVEIL) traverse the membrane as a helical segment. The Cytoplasmic segment spans residues 210 to 225 (RTLFRSRSKRRHRTVK). A helical membrane pass occupies residues 226–250 (LIFAIVVAYFLSWGPYNFTLFLQTL). Residues 251-267 (FRTQIIRSCEAKQQLEY) lie on the Extracellular side of the membrane. Residues 268–291 (ALLICRNLAFSHCCFNPVLYVFVG) traverse the membrane as a helical segment. Over 292–333 (VKFRTHLKHVLRQFWFCRLQAPSPASIPHSPGAFAYEGASFY) the chain is Cytoplasmic.

This sequence belongs to the G-protein coupled receptor 1 family.

The protein resides in the cell membrane. Functionally, receptor for chemokines SCYC1 and SCYC2. Subsequently transduces a signal by increasing the intracellular calcium ions level. Receptor for XCL1/Lymphotactin. The chain is Chemokine XC receptor 1 (XCR1) from Homo sapiens (Human).